A 133-amino-acid polypeptide reads, in one-letter code: Fluoride-specific ion channel FluC 3 (133 aa).

Transmembrane regions (helical) follow at residues 7-27 (ILVL…SGYV), 37-57 (WGTF…AGLG), and 60-80 (LGAI…LLGG). The Na(+) site is built by Gly79 and Thr82. The helical transmembrane segment at 107 to 127 (IVASALLCVLAVAAGYGGIMW) threads the bilayer.

This sequence belongs to the fluoride channel Fluc/FEX (TC 1.A.43) family.

The protein resides in the cell inner membrane. It catalyses the reaction fluoride(in) = fluoride(out). Its activity is regulated as follows. Na(+) is not transported, but it plays an essential structural role and its presence is essential for fluoride channel function. Fluoride-specific ion channel. Important for reducing fluoride concentration in the cell, thus reducing its toxicity. This Brucella suis biovar 1 (strain 1330) protein is Fluoride-specific ion channel FluC 3.